Consider the following 501-residue polypeptide: uncharacterized protein (501 aa).

Residue Glu236 is the Proton donor of the active site. The active-site Nucleophile is the Glu333.

It belongs to the glycosyl hydrolase 5 (cellulase A) family.

The protein resides in the mitochondrion intermembrane space. This is an uncharacterized protein from Saccharomyces cerevisiae (strain ATCC 204508 / S288c) (Baker's yeast).